We begin with the raw amino-acid sequence, 403 residues long: MAPSAISTSPPPTDRVSSSLASYKGYDHVHWYVGNAKQAASYYITRMGFKRIAYRGLETGCRSVCSHVVRNGDITFILTSPLRSLDQVDRFPPEEQELLKEIHAHLEKHGDGVKDVAFEVDSVDSVFYAATNNGAKIVSQPRTLEDDNGQVRVATIQTYGETTHTLVERGSYHGAFLPGYRMETGVEDPISQLLPGVHLNRIDHCVGNQDWDEMDKVCEYYEKALGFHRFWSVDDKQICTEYSALKSIVMASPNEVVKMPINEPAKGKKQSQIEEYVDFYNGAGVQHIALLTDDIIRDITNLKARGVEFIKVPDTYYEDIKVRLKKAGLTLHEDFETIRSLDILIDFDEGGYLLQLFTKHLMDRPTVFIEIIQRHNFSGFGAGNFKSLFEAIEREQALRGNLV.

VOC domains lie at 25–169 and 201–359; these read GYDH…LVER and RIDH…LFTK. Residues histidine 204, histidine 287, and glutamate 370 each contribute to the Fe cation site.

It belongs to the 4HPPD family. Homodimer. It depends on Fe cation as a cofactor.

It catalyses the reaction 3-(4-hydroxyphenyl)pyruvate + O2 = homogentisate + CO2. It functions in the pathway amino-acid degradation; L-phenylalanine degradation; acetoacetate and fumarate from L-phenylalanine: step 3/6. In terms of biological role, 4-hydroxyphenylpyruvate dioxygenase; part of the L-tyrosine degradation gene cluster that mediates the biosynthesis of the brownish pigment pyomelanin as an alternative melanin. The 4-hydroxyphenylpyruvate dioxygenase hppD catalyzes the conversion of 4-hydroxyphenylpyruvate to homogentisic acid (HGA). The protein hmgX is crucial for this conversion and thus, probably functions as an accessory factor to mediate specific activity of hppD. The homogentisate 1,2-dioxygenase hmgA is then involved in the cleavage of the aromatic ring of HGA and its conversion to 4-maleylacetoacetate. When hmgA activity is lowered by the cell wall integrity (CWI) signaling pathway, HGA accumulates and leads to the production of pyomelanin through benzoquinone acetic acid after oxidation and polymerization. On the opposite, in non-stress conditions, both hppD and hmgA activities are balanced and HGA is degraded into 4-maleylacetoacetate. 4-maleylacetoacetate is further converted to 4-fumarylacetoacetate by the maleylacetoacetate isomerase maiA, which is degraded into fumarate and acetoacetate by the fumarylacetoacetase fahA. This is 4-hydroxyphenylpyruvate dioxygenase from Aspergillus fumigatus (strain ATCC MYA-4609 / CBS 101355 / FGSC A1100 / Af293) (Neosartorya fumigata).